Here is a 1523-residue protein sequence, read N- to C-terminus: Disco-interacting protein 2 homolog A (1523 aa).

One can recognise a DMAP1-binding domain in the interval 9-105 (EAAPLPAEVL…TSSASEDEGS (97 aa)). The disordered stretch occupies residues 72-110 (KMPMPSKRRSALVHSSVETYTPPDTSSASEDEGSLRRPG). The segment covering 87-99 (SVETYTPPDTSSA) has biased composition (polar residues). Phosphothreonine occurs at positions 92 and 115. Residues 132–158 (QGSSTSSSASSTSSHPGGRPAAAPSAS) are disordered. Residues 134-158 (SSTSSSASSTSSHPGGRPAAAPSAS) show a composition bias toward low complexity. 2 short sequence motifs (PXXP motif; required for interaction with CTTN) span residues 235-238 (PKRP) and 259-262 (PNQP).

This sequence belongs to the DIP2 family. Interacts with FSTL1; DIP2A may act as a cell surface receptor for FSTL1. Interacts (via N-terminus) with CTTN (via SH3 domain); the interaction promotes acetylation of CTTN and is required for proper synaptic transmission. Interacts with SHANK3. In terms of tissue distribution, detected in heart, liver, spleen, lung, kidney and brain with highest levels in brain (at protein level). In adult cortex, preferentially expressed in excitatory neurons. Broadly expressed in neuronal, reproductive and vascular tissues as well as in heart, kidney, liver and lung with expression detected in neurons, mesenchyme, endothelium, smooth muscle cells and cardiomyocytes. Expressed in ectoderm-derived tissues in the developing embryo. Expressed in the developing nervous system.

It is found in the cell membrane. Its subcellular location is the mitochondrion. The protein resides in the cell projection. The protein localises to the dendritic spine. The catalysed reaction is acetate + ATP + CoA = acetyl-CoA + AMP + diphosphate. Its function is as follows. Catalyzes the de novo synthesis of acetyl-CoA in vitro. Promotes acetylation of CTTN, possibly by providing the acetyl donor, ensuring correct dendritic spine morphology and synaptic transmission. Binds to follistatin-related protein FSTL1 and may act as a cell surface receptor for FSTL1, contributing to AKT activation and subsequent FSTL1-induced survival and function of endothelial cells and cardiac myocytes. In Mus musculus (Mouse), this protein is Disco-interacting protein 2 homolog A (Dip2a).